Reading from the N-terminus, the 219-residue chain is Probable nicotinate-nucleotide adenylyltransferase (219 aa).

The protein belongs to the NadD family.

It carries out the reaction nicotinate beta-D-ribonucleotide + ATP + H(+) = deamido-NAD(+) + diphosphate. The protein operates within cofactor biosynthesis; NAD(+) biosynthesis; deamido-NAD(+) from nicotinate D-ribonucleotide: step 1/1. In terms of biological role, catalyzes the reversible adenylation of nicotinate mononucleotide (NaMN) to nicotinic acid adenine dinucleotide (NaAD). The protein is Probable nicotinate-nucleotide adenylyltransferase of Pseudomonas entomophila (strain L48).